The following is a 285-amino-acid chain: Pseudouridine-5'-phosphate glycosidase (285 aa).

The active-site Proton donor is Glu17. 2 residues coordinate substrate: Lys77 and Val97. Asp126 is a binding site for Mn(2+). 128-130 (SQD) is a binding site for substrate. Lys147 (nucleophile) is an active-site residue.

This sequence belongs to the pseudouridine-5'-phosphate glycosidase family. Homotrimer. The cofactor is Mn(2+).

The enzyme catalyses D-ribose 5-phosphate + uracil = psi-UMP + H2O. Functionally, catalyzes the reversible cleavage of pseudouridine 5'-phosphate (PsiMP) to ribose 5-phosphate and uracil. Functions biologically in the cleavage direction, as part of a pseudouridine degradation pathway. This Thermotoga maritima (strain ATCC 43589 / DSM 3109 / JCM 10099 / NBRC 100826 / MSB8) protein is Pseudouridine-5'-phosphate glycosidase.